Reading from the N-terminus, the 475-residue chain is Protein translocase subunit SecD (475 aa).

The next 6 helical transmembrane spans lie at 7–27 (LLIT…SLKF), 313–333 (KGFM…FIYY), 338–358 (LIAD…MAYL), 364–384 (LPGV…NVLI), 410–430 (FWTI…LFQF), and 437–457 (GFAV…VTVT).

The protein belongs to the SecD/SecF family. SecD subfamily. Forms a complex with SecF. Part of the essential Sec protein translocation apparatus which comprises SecA, SecYEG and auxiliary proteins SecDF. Other proteins may also be involved.

The protein localises to the cell inner membrane. In terms of biological role, part of the Sec protein translocase complex. Interacts with the SecYEG preprotein conducting channel. SecDF uses the proton motive force (PMF) to complete protein translocation after the ATP-dependent function of SecA. The protein is Protein translocase subunit SecD of Endomicrobium trichonymphae.